A 596-amino-acid polypeptide reads, in one-letter code: UvrABC system protein C (596 aa).

A GIY-YIG domain is found at 14 to 91 (DQPGCYLMKD…IKLHDPKYNV (78 aa)). The UVR domain maps to 196–231 (EAVKKELEVKMLAAAENLEFERAKEFRDQIAHIDTV).

This sequence belongs to the UvrC family. In terms of assembly, interacts with UvrB in an incision complex.

The protein localises to the cytoplasm. Its function is as follows. The UvrABC repair system catalyzes the recognition and processing of DNA lesions. UvrC both incises the 5' and 3' sides of the lesion. The N-terminal half is responsible for the 3' incision and the C-terminal half is responsible for the 5' incision. The sequence is that of UvrABC system protein C from Lysinibacillus sphaericus (strain C3-41).